A 341-amino-acid polypeptide reads, in one-letter code: S-adenosylmethionine:tRNA ribosyltransferase-isomerase (341 aa).

This sequence belongs to the QueA family. In terms of assembly, monomer.

Its subcellular location is the cytoplasm. It carries out the reaction 7-aminomethyl-7-carbaguanosine(34) in tRNA + S-adenosyl-L-methionine = epoxyqueuosine(34) in tRNA + adenine + L-methionine + 2 H(+). It functions in the pathway tRNA modification; tRNA-queuosine biosynthesis. In terms of biological role, transfers and isomerizes the ribose moiety from AdoMet to the 7-aminomethyl group of 7-deazaguanine (preQ1-tRNA) to give epoxyqueuosine (oQ-tRNA). The polypeptide is S-adenosylmethionine:tRNA ribosyltransferase-isomerase (Clostridium botulinum (strain Kyoto / Type A2)).